Consider the following 385-residue polypeptide: DNA double-strand break repair protein Mre11 (385 aa).

Residues Asp14, His16, and Asp58 each coordinate Mn(2+). Catalysis depends on His94, which acts as the Proton donor. Mn(2+) contacts are provided by His180, His216, and His218.

Belongs to the MRE11/RAD32 family. Homodimer. Forms a heterotetramer composed of two Mre11 subunits and two Rad50 subunits. Homodimerization facilitates DNA binding. The cofactor is Mn(2+).

With respect to regulation, nuclease activity is regulated by Rad50. The mirin-derivative PFM39, specifically inhibits the 3'-5' exonuclease activity. The N-alkylated mirin-derivatives PFM03 and PFM01 specifically inhibit the endonuclease activity. Part of the Rad50/Mre11 complex, which is involved in the early steps of DNA double-strand break (DSB) repair. The complex may facilitate opening of the processed DNA ends to aid in the recruitment of HerA and NurA. Mre11 binds to DSB ends and has both double-stranded 3'-5' exonuclease activity and single-stranded endonuclease activity. The polypeptide is DNA double-strand break repair protein Mre11 (Thermotoga maritima (strain ATCC 43589 / DSM 3109 / JCM 10099 / NBRC 100826 / MSB8)).